Consider the following 360-residue polypeptide: Membrane-bound lytic murein transglycosylase C (360 aa).

The first 16 residues, 1–16, serve as a signal peptide directing secretion; the sequence is MKKLLALAVIAPLLIS. Cys17 carries N-palmitoyl cysteine lipidation. The S-diacylglycerol cysteine moiety is linked to residue Cys17.

It belongs to the transglycosylase Slt family.

The protein localises to the cell outer membrane. It catalyses the reaction Exolytic cleavage of the (1-&gt;4)-beta-glycosidic linkage between N-acetylmuramic acid (MurNAc) and N-acetylglucosamine (GlcNAc) residues in peptidoglycan, from either the reducing or the non-reducing ends of the peptidoglycan chains, with concomitant formation of a 1,6-anhydrobond in the MurNAc residue.. Its function is as follows. Murein-degrading enzyme. May play a role in recycling of muropeptides during cell elongation and/or cell division. This chain is Membrane-bound lytic murein transglycosylase C, found in Salmonella arizonae (strain ATCC BAA-731 / CDC346-86 / RSK2980).